The following is a 535-amino-acid chain: Arylsulfatase G (535 aa).

The first 18 residues, 1–18, serve as a signal peptide directing secretion; the sequence is MGWLFLKVLFLGVTFLGC. Asp-44, Asp-45, and Cys-84 together coordinate Ca(2+). Residue Cys-84 is the Nucleophile of the active site. A 3-oxoalanine (Cys) modification is found at Cys-84. A glycan (N-linked (GlcNAc...) asparagine) is linked at Asn-117. Lys-137 is a binding site for substrate. Residue His-139 is part of the active site. Ser-162 provides a ligand contact to substrate. Asn-215 carries N-linked (GlcNAc...) asparagine glycosylation. His-251 lines the substrate pocket. Residues Asp-302 and Asn-303 each coordinate Ca(2+). N-linked (GlcNAc...) asparagine glycosylation is found at Asn-356 and Asn-497.

Belongs to the sulfatase family. Ca(2+) serves as cofactor. N-glycosylated with both high mannose and complex type sugars. In terms of processing, the conversion to 3-oxoalanine (also known as C-formylglycine, FGly), of a serine or cysteine residue in prokaryotes and of a cysteine residue in eukaryotes, is critical for catalytic activity. Post-translationally, the 63-kDa precursor undergoes proteolytic processing in two steps, yielding two fragments in the first step (apparent molecular masses of 44 and 18 kDa). In the second step, the 44-kDa fragment is processed further to the 34- and 10-kDa chains. The 10-kDa chain is a cleavage product of the 44-kDa fragment but linked to the 18-kDa chain through a disulfide bridge.

It localises to the lysosome. The catalysed reaction is an aryl sulfate + H2O = a phenol + sulfate + H(+). It carries out the reaction Hydrolysis of the 3-sulfate groups of the N-sulfo-D-glucosamine 3-O-sulfate units of heparin.. In terms of biological role, displays arylsulfatase activity with pseudosubstrates at acidic pH, such as p-nitrocatechol sulfate. Catalyzes the hydrolysis of the 3-sulfate groups of the N-sulfo-D-glucosamine 3-O-sulfate units of heparin. This Canis lupus familiaris (Dog) protein is Arylsulfatase G (ARSG).